The following is an 882-amino-acid chain: E3 ubiquitin-protein ligase SH3RF3 (882 aa).

Residues 18–42 (AQSEGDEDRPGERRRRRAAATAAGA) are disordered. Residues 57-98 (CSVCLERLDTTAKVLPCQHTFCRRCLESIVCSRHELRCPECR) form an RING-type zinc finger. The tract at residues 124–159 (RPRAGTSPGGSPPARPIPGQSAAPTLAGGGGGAAGS) is disordered. 2 SH3 domains span residues 194–253 (CLLP…CIQP) and 256–319 (HAPP…LNDS). A disordered region spans residues 368–399 (RRVDGKKNTKKRHSFTALSVTHRSSQAASHRH). The tract at residues 369–439 (RVDGKKNTKK…APTQDVSSSA (71 aa)) is interaction with RAC1. Phosphoserine is present on S400. Positions 433 to 444 (QDVSSSAGSTPT) are enriched in polar residues. Residues 433 to 458 (QDVSSSAGSTPTAVPRAASVSGEQGT) form a disordered region. Residues 464 to 525 (LPLNVYLALY…PGNYVTPVSR (62 aa)) form the SH3 3 domain. Polar residues-rich tracts occupy residues 575 to 588 (PQAHAQHPTASPPT), 596 to 635 (AQPTASQARSTISTAAHSAAQAQDRPTATVSPLRTQNSPS), and 697 to 706 (LSTSSPTNTG). 2 disordered regions span residues 575–664 (PQAH…CPRP) and 693–747 (PIGV…PTHD). The segment covering 708–721 (KLDEKKSEKKEKKS) has biased composition (basic and acidic residues). S797 carries the phosphoserine modification. In terms of domain architecture, SH3 4 spans 823 to 882 (LPRERYRVVVSYPPQSEAEIELKEGDIVFVHKKREDGWYKGTLQRNGRTGLFPGSFVESF).

Belongs to the SH3RF family. As to quaternary structure, interacts (via SH3 domain 3) with PAK2. Interacts with RAC1 (GTP-bound form). Post-translationally, autoubiquitinated.

It carries out the reaction S-ubiquitinyl-[E2 ubiquitin-conjugating enzyme]-L-cysteine + [acceptor protein]-L-lysine = [E2 ubiquitin-conjugating enzyme]-L-cysteine + N(6)-ubiquitinyl-[acceptor protein]-L-lysine.. Its pathway is protein modification; protein ubiquitination. In terms of biological role, has E3 ubiquitin-protein ligase activity. This chain is E3 ubiquitin-protein ligase SH3RF3 (SH3RF3), found in Homo sapiens (Human).